A 1035-amino-acid chain; its full sequence is Teashirt homolog 2 (1035 aa).

Residues M1–Q92 form a disordered region. A coiled-coil region spans residues A13–Q42. Over residues L21–S37 the composition is skewed to acidic residues. Polar residues-rich tracts occupy residues S39–P49 and S66–Q92. Residue K189 forms a Glycyl lysine isopeptide (Lys-Gly) (interchain with G-Cter in SUMO2) linkage. 2 C2H2-type zinc fingers span residues F216 to H240 and L276 to H300. Residues H240–D266 form a disordered region. Residues K307 and K316 each participate in a glycyl lysine isopeptide (Lys-Gly) (interchain with G-Cter in SUMO2) cross-link. Residues L381 to H405 form a C2H2-type 3; atypical zinc finger. K418 participates in a covalent cross-link: Glycyl lysine isopeptide (Lys-Gly) (interchain with G-Cter in SUMO2). The segment covering S432–S450 has biased composition (low complexity). Residues S432–A496 are disordered. Residues E460 to E483 show a composition bias toward basic and acidic residues. Glycyl lysine isopeptide (Lys-Gly) (interchain with G-Cter in SUMO2) cross-links involve residues K462, K481, K498, and K602. Disordered stretches follow at residues Q600–V674 and Q764–H791. Residues V601–Q669 are compositionally biased toward basic and acidic residues. Residues K801 and K821 each participate in a glycyl lysine isopeptide (Lys-Gly) (interchain with G-Cter in SUMO2) cross-link. Residues R842–G912 constitute a DNA-binding region (homeobox). Residues F927–H949 form a C2H2-type 4 zinc finger. Over residues V968 to S977 the composition is skewed to low complexity. Disordered regions lie at residues V968–G987 and S1015–E1035. Phosphoserine is present on S981. The C2H2-type 5 zinc-finger motif lies at F995 to H1018.

Belongs to the teashirt C2H2-type zinc-finger protein family. Interacts (via homeobox domain) with APBB1 (via PID domain 1). In terms of processing, sumoylated.

Its subcellular location is the nucleus. Probable transcriptional regulator involved in developmental processes. May act as a transcriptional repressor (Potential). The polypeptide is Teashirt homolog 2 (TSHZ2) (Sus scrofa (Pig)).